Reading from the N-terminus, the 305-residue chain is D-alanine--D-alanine ligase (305 aa).

Residues 107–299 (KVIFASAGLK…FGELVLRILQ (193 aa)) enclose the ATP-grasp domain. Residue 134 to 185 (PLPVVVKPSREGSSVGVGIVRDPSRMQAALDEAFRYDSEILIEGFIDGREVQ) participates in ATP binding. Mg(2+) contacts are provided by aspartate 253, glutamate 266, and asparagine 268.

This sequence belongs to the D-alanine--D-alanine ligase family. It depends on Mg(2+) as a cofactor. The cofactor is Mn(2+).

It localises to the cytoplasm. It catalyses the reaction 2 D-alanine + ATP = D-alanyl-D-alanine + ADP + phosphate + H(+). The protein operates within cell wall biogenesis; peptidoglycan biosynthesis. Its function is as follows. Cell wall formation. The sequence is that of D-alanine--D-alanine ligase from Citrifermentans bemidjiense (strain ATCC BAA-1014 / DSM 16622 / JCM 12645 / Bem) (Geobacter bemidjiensis).